Consider the following 622-residue polypeptide: uncharacterized protein (622 aa).

[4Fe-4S] cluster contacts are provided by Cys302, Cys306, Cys310, and Cys521.

It belongs to the AOR/FOR family. [4Fe-4S] cluster serves as cofactor.

This is an uncharacterized protein from Methanocaldococcus jannaschii (strain ATCC 43067 / DSM 2661 / JAL-1 / JCM 10045 / NBRC 100440) (Methanococcus jannaschii).